A 285-amino-acid polypeptide reads, in one-letter code: tRNA-cytidine(32) 2-sulfurtransferase (285 aa).

A PP-loop motif motif is present at residues 48-53; that stretch reads SGGKDS. The [4Fe-4S] cluster site is built by C122, C125, and C213.

This sequence belongs to the TtcA family. Homodimer. Requires Mg(2+) as cofactor. [4Fe-4S] cluster serves as cofactor.

Its subcellular location is the cytoplasm. It carries out the reaction cytidine(32) in tRNA + S-sulfanyl-L-cysteinyl-[cysteine desulfurase] + AH2 + ATP = 2-thiocytidine(32) in tRNA + L-cysteinyl-[cysteine desulfurase] + A + AMP + diphosphate + H(+). It functions in the pathway tRNA modification. Its function is as follows. Catalyzes the ATP-dependent 2-thiolation of cytidine in position 32 of tRNA, to form 2-thiocytidine (s(2)C32). The sulfur atoms are provided by the cysteine/cysteine desulfurase (IscS) system. The polypeptide is tRNA-cytidine(32) 2-sulfurtransferase (Cytophaga hutchinsonii (strain ATCC 33406 / DSM 1761 / CIP 103989 / NBRC 15051 / NCIMB 9469 / D465)).